An 826-amino-acid polypeptide reads, in one-letter code: Ribosome-releasing factor 2, mitochondrial (826 aa).

The N-terminal 44 residues, 1–44 (MIVRNLLGKNRLCCLQPKLLLSTLSQRPQLQLSLQLLCRATRLY), are a transit peptide targeting the mitochondrion. The region spanning 53–340 (PKTRNIGIIA…GITNYLPSPL (288 aa)) is the tr-type G domain. GTP contacts are provided by residues 62 to 69 (AHIDAGKT), 126 to 130 (DTPGH), and 180 to 183 (NKMD).

Belongs to the TRAFAC class translation factor GTPase superfamily. Classic translation factor GTPase family. EF-G/EF-2 subfamily.

The protein resides in the mitochondrion. Functionally, mitochondrial GTPase that mediates the disassembly of ribosomes from messenger RNA at the termination of mitochondrial protein biosynthesis. Not involved in the GTP-dependent ribosomal translocation step during translation elongation. This is Ribosome-releasing factor 2, mitochondrial from Lodderomyces elongisporus (strain ATCC 11503 / CBS 2605 / JCM 1781 / NBRC 1676 / NRRL YB-4239) (Yeast).